Reading from the N-terminus, the 136-residue chain is Large ribosomal subunit protein uL16 (136 aa).

It belongs to the universal ribosomal protein uL16 family. Part of the 50S ribosomal subunit.

Binds 23S rRNA and is also seen to make contacts with the A and possibly P site tRNAs. The polypeptide is Large ribosomal subunit protein uL16 (Alteromonas mediterranea (strain DSM 17117 / CIP 110805 / LMG 28347 / Deep ecotype)).